The primary structure comprises 695 residues: MAREFSLEKTRNIGIMAHIDAGKTTTTERILFYTGRIHKIGETHEGASQMDWMEQEQERGITITSAATTAQWKGYRVNIIDTPGHVDFTVEVERSLRVLDGAVAVLDAQSGVEPQTETVWRQATTYGVPRVVFVNKMDKIGADFLYSVGTLHERLAANAHPIQLPIGAEDTFEGIIDLIEMNALYYEDDLGNDPHIKEIPADLKDLADEYRGKLVEAVAELDEELMMKYLEGEEITKEELKAGIRKGTLNVEFYPVVCGTAFKNKGVQPMLDAVLDYLPAPTDVPAINGVLPDGEEAARHADDSEPFSSLAFKVMTDPYVGRLTFFRVYSGTLNSGSYVQNSTKGKRERVGRILQMHANHREEISIVYAGDIAAAVGLKDTTTGDTLCDEKEQIILESMEFPEPVIQVAIEPKSKADQDKMGQALAKLAEEDPTFRAETDQETGQTLISGMGELHLDILVDRMRREFRVEANVGDPQVSYRETFRKSAQVEGKFVRQSGGRGQYGHVWIEFGPNEEGKGFEFENAIVGGVVPREYIPAVQAGLEGALDNGVLAGYPLIDIKAKLYDGSYHDVDSNEMAFKVAASMALRNAAKKCDPVILEPMMAVEVVIPEEYLGDIMGNITSRRGRVDGMEARGNAQVVRAFVPLANMFGYATHLRSGTQGRGVYTMQFDHYEEVPKSIAEEIIKANGGNNKED.

One can recognise a tr-type G domain in the interval 8–282; the sequence is EKTRNIGIMA…AVLDYLPAPT (275 aa). Residues 17–24, 81–85, and 135–138 each bind GTP; these read AHIDAGKT, DTPGH, and NKMD.

It belongs to the TRAFAC class translation factor GTPase superfamily. Classic translation factor GTPase family. EF-G/EF-2 subfamily.

Its subcellular location is the cytoplasm. Functionally, catalyzes the GTP-dependent ribosomal translocation step during translation elongation. During this step, the ribosome changes from the pre-translocational (PRE) to the post-translocational (POST) state as the newly formed A-site-bound peptidyl-tRNA and P-site-bound deacylated tRNA move to the P and E sites, respectively. Catalyzes the coordinated movement of the two tRNA molecules, the mRNA and conformational changes in the ribosome. This is Elongation factor G from Listeria monocytogenes serotype 4b (strain CLIP80459).